Reading from the N-terminus, the 769-residue chain is Calcium up-regulated protein F (769 aa).

The tract at residues 1–21 (MINIKDISKSSNQSEEKSLKG) is disordered. 2 consecutive Ricin B-type lectin domains span residues 25–145 (KTKY…WTTF) and 116–249 (QGNG…WGIN).

The protein belongs to the cup family.

It is found in the cytoplasm. The protein localises to the membrane. Its function is as follows. May play an important role in stabilizing and/or regulating the cell membrane during Ca(2+) stress or certain stages of development. This is Calcium up-regulated protein F (cupF) from Dictyostelium discoideum (Social amoeba).